Here is a 136-residue protein sequence, read N- to C-terminus: Nucleoside diphosphate kinase (136 aa).

The ATP site is built by Lys10, Phe58, Arg86, Thr92, Arg104, and Asn114. Catalysis depends on His117, which acts as the Pros-phosphohistidine intermediate.

It belongs to the NDK family. In terms of assembly, homotetramer. The cofactor is Mg(2+).

It localises to the cytoplasm. The enzyme catalyses a 2'-deoxyribonucleoside 5'-diphosphate + ATP = a 2'-deoxyribonucleoside 5'-triphosphate + ADP. It carries out the reaction a ribonucleoside 5'-diphosphate + ATP = a ribonucleoside 5'-triphosphate + ADP. In terms of biological role, major role in the synthesis of nucleoside triphosphates other than ATP. The ATP gamma phosphate is transferred to the NDP beta phosphate via a ping-pong mechanism, using a phosphorylated active-site intermediate. The sequence is that of Nucleoside diphosphate kinase from Corynebacterium diphtheriae (strain ATCC 700971 / NCTC 13129 / Biotype gravis).